Reading from the N-terminus, the 69-residue chain is Conotoxin Lp3.1 (69 aa).

A signal peptide spans 1 to 20 (MLKMGVLLFIFLVLFPLTTL). Positions 21–54 (ELDTDRPVERHAAIKQDLKPQERRGIRLHAPRDE) are excised as a propeptide. 3 disulfides stabilise this stretch: C55-C67, C56-C65, and C61-C68.

Belongs to the conotoxin M superfamily. Expressed by the venom duct.

The protein localises to the secreted. This chain is Conotoxin Lp3.1, found in Conus leopardus (Leopard cone).